The following is a 201-amino-acid chain: FMN reductase (NADH) RutF 1 (201 aa).

Low complexity predominate over residues 167–195 (PRAPRSGSAPAEPARAARAVGARPAEGPA). Residues 167–201 (PRAPRSGSAPAEPARAARAVGARPAEGPALALRSA) form a disordered region.

It belongs to the non-flavoprotein flavin reductase family. RutF subfamily.

The catalysed reaction is FMNH2 + NAD(+) = FMN + NADH + 2 H(+). Its function is as follows. Catalyzes the reduction of FMN to FMNH2 which is used to reduce pyrimidine by RutA via the Rut pathway. In Methylorubrum extorquens (strain CM4 / NCIMB 13688) (Methylobacterium extorquens), this protein is FMN reductase (NADH) RutF 1.